The chain runs to 587 residues: Formate--tetrahydrofolate ligase (587 aa).

73–80 serves as a coordination point for ATP; it reads TPLGEGKS.

It belongs to the formate--tetrahydrofolate ligase family.

The catalysed reaction is (6S)-5,6,7,8-tetrahydrofolate + formate + ATP = (6R)-10-formyltetrahydrofolate + ADP + phosphate. It participates in one-carbon metabolism; tetrahydrofolate interconversion. The polypeptide is Formate--tetrahydrofolate ligase (Desulfosudis oleivorans (strain DSM 6200 / JCM 39069 / Hxd3) (Desulfococcus oleovorans)).